Consider the following 75-residue polypeptide: Translation initiation factor IF-1 1 (75 aa).

Positions 1–74 constitute an S1-like domain; that stretch reads MARSDMIEVD…TRGRIVYRYR (74 aa).

Belongs to the IF-1 family. Component of the 30S ribosomal translation pre-initiation complex which assembles on the 30S ribosome in the order IF-2 and IF-3, IF-1 and N-formylmethionyl-tRNA(fMet); mRNA recruitment can occur at any time during PIC assembly.

It localises to the cytoplasm. One of the essential components for the initiation of protein synthesis. Stabilizes the binding of IF-2 and IF-3 on the 30S subunit to which N-formylmethionyl-tRNA(fMet) subsequently binds. Helps modulate mRNA selection, yielding the 30S pre-initiation complex (PIC). Upon addition of the 50S ribosomal subunit IF-1, IF-2 and IF-3 are released leaving the mature 70S translation initiation complex. This Symbiobacterium thermophilum (strain DSM 24528 / JCM 14929 / IAM 14863 / T) protein is Translation initiation factor IF-1 1.